A 377-amino-acid polypeptide reads, in one-letter code: Dihydroorotate dehydrogenase (quinone) (377 aa).

FMN is bound by residues 78–82 (AGCDK) and A102. Substrate is bound at residue K82. 127–130 (NRLG) is a binding site for substrate. Positions 159 and 192 each coordinate FMN. Position 192 (N192) interacts with substrate. The active-site Nucleophile is S195. N197 contributes to the substrate binding site. FMN contacts are provided by K230 and T258. Residue 259–260 (NT) coordinates substrate. FMN contacts are provided by residues G288, G317, and 338–339 (YT).

The protein belongs to the dihydroorotate dehydrogenase family. Type 2 subfamily. As to quaternary structure, monomer. FMN serves as cofactor.

Its subcellular location is the cell membrane. The enzyme catalyses (S)-dihydroorotate + a quinone = orotate + a quinol. Its pathway is pyrimidine metabolism; UMP biosynthesis via de novo pathway; orotate from (S)-dihydroorotate (quinone route): step 1/1. In terms of biological role, catalyzes the conversion of dihydroorotate to orotate with quinone as electron acceptor. The sequence is that of Dihydroorotate dehydrogenase (quinone) from Rippkaea orientalis (strain PCC 8801 / RF-1) (Cyanothece sp. (strain PCC 8801)).